The following is a 191-amino-acid chain: Flagellar transcriptional regulator FlhC (191 aa).

Residues C139, C142, C159, and C162 each contribute to the Zn(2+) site.

This sequence belongs to the FlhC family. In terms of assembly, heterohexamer composed of two FlhC and four FlhD subunits. Each FlhC binds a FlhD dimer, forming a heterotrimer, and a hexamer assembles by dimerization of two heterotrimers. Zn(2+) serves as cofactor.

It is found in the cytoplasm. In terms of biological role, functions in complex with FlhD as a master transcriptional regulator that regulates transcription of several flagellar and non-flagellar operons by binding to their promoter region. Activates expression of class 2 flagellar genes, including fliA, which is a flagellum-specific sigma factor that turns on the class 3 genes. Also regulates genes whose products function in a variety of physiological pathways. This Enterobacter cloacae subsp. cloacae (strain ATCC 13047 / DSM 30054 / NBRC 13535 / NCTC 10005 / WDCM 00083 / NCDC 279-56) protein is Flagellar transcriptional regulator FlhC.